The following is a 245-amino-acid chain: NAD(P)H-hydrate epimerase (245 aa).

Residues 21-221 (MREIDRLAVQ…DLGIPPAVYT (201 aa)) enclose the YjeF N-terminal domain. 72–76 (GNGGG) lines the (6S)-NADPHX pocket. The K(+) site is built by Asn-73 and Asp-135. (6S)-NADPHX contacts are provided by residues 139-145 (GYSLLGA) and Asp-168. Ser-171 contacts K(+).

It belongs to the NnrE/AIBP family. K(+) is required as a cofactor.

It carries out the reaction (6R)-NADHX = (6S)-NADHX. The enzyme catalyses (6R)-NADPHX = (6S)-NADPHX. Catalyzes the epimerization of the S- and R-forms of NAD(P)HX, a damaged form of NAD(P)H that is a result of enzymatic or heat-dependent hydration. This is a prerequisite for the S-specific NAD(P)H-hydrate dehydratase to allow the repair of both epimers of NAD(P)HX. This Dehalogenimonas lykanthroporepellens (strain ATCC BAA-1523 / JCM 15061 / BL-DC-9) protein is NAD(P)H-hydrate epimerase.